The following is a 224-amino-acid chain: ATP-dependent dethiobiotin synthetase BioD (224 aa).

14-19 (GIGKTV) lines the ATP pocket. Thr18 is a Mg(2+) binding site. Residue Lys39 is part of the active site. Ser43 contributes to the substrate binding site. Residues Asp56, 117-120 (EGVG), and 177-178 (NE) each bind ATP. Positions 56 and 117 each coordinate Mg(2+).

It belongs to the dethiobiotin synthetase family. In terms of assembly, homodimer. Mg(2+) is required as a cofactor.

The protein resides in the cytoplasm. The catalysed reaction is (7R,8S)-7,8-diammoniononanoate + CO2 + ATP = (4R,5S)-dethiobiotin + ADP + phosphate + 3 H(+). It participates in cofactor biosynthesis; biotin biosynthesis; biotin from 7,8-diaminononanoate: step 1/2. Catalyzes a mechanistically unusual reaction, the ATP-dependent insertion of CO2 between the N7 and N8 nitrogen atoms of 7,8-diaminopelargonic acid (DAPA, also called 7,8-diammoniononanoate) to form a ureido ring. The protein is ATP-dependent dethiobiotin synthetase BioD of Xanthomonas campestris pv. campestris (strain 8004).